A 349-amino-acid polypeptide reads, in one-letter code: Protein Wnt-7a (349 aa).

Residues 1-31 (MNRKARRCLGHLFLSLGMVYLRIGGFSSVVA) form the signal peptide. 5 cysteine pairs are disulfide-bonded: Cys73–Cys84, Cys123–Cys131, Cys133–Cys152, Cys200–Cys214, and Cys202–Cys209. N-linked (GlcNAc...) asparagine glycosylation is found at Asn83 and Asn127. Ser206 carries O-palmitoleoyl serine; by PORCN lipidation. Residues 238–266 (VEPVRASRNKRPTFLKIKKPLSYRKPMDT) form a disordered linker region. Disulfide bonds link Cys278/Cys309, Cys294/Cys304, Cys308/Cys348, Cys324/Cys339, Cys326/Cys336, and Cys331/Cys332. The N-linked (GlcNAc...) asparagine glycan is linked to Asn295.

Belongs to the Wnt family. As to quaternary structure, forms a soluble 1:1 complex with AFM; this prevents oligomerization and is required for prolonged biological activity. The complex with AFM may represent the physiological form in body fluids. Interacts with PORCN. Interacts (via intrinsically disordered linker region) with RECK; interaction with RECK confers ligand selectivity for Wnt7 in brain endothelial cells and allows these cells to selectively respond to Wnt7. Interacts with FZD5. Post-translationally, palmitoleoylation is required for efficient binding to frizzled receptors. Depalmitoleoylation leads to Wnt signaling pathway inhibition.

It localises to the secreted. The protein localises to the extracellular space. Its subcellular location is the extracellular matrix. Functionally, ligand for members of the frizzled family of seven transmembrane receptors that functions in the canonical Wnt/beta-catenin signaling pathway. Plays an important role in embryonic development, including dorsal versus ventral patterning during limb development, skeleton development and urogenital tract development. Required for central nervous system (CNS) angiogenesis and blood-brain barrier regulation. Required for normal, sexually dimorphic development of the Mullerian ducts, and for normal fertility in both sexes. Required for normal neural stem cell proliferation in the hippocampus dentate gyrus. Required for normal progress through the cell cycle in neural progenitor cells, for self-renewal of neural stem cells, and for normal neuronal differentiation and maturation. Promotes formation of synapses via its interaction with FZD5. The sequence is that of Protein Wnt-7a (WNT7A) from Pongo pygmaeus (Bornean orangutan).